The primary structure comprises 196 residues: Glycerol-3-phosphate acyltransferase (196 aa).

A run of 5 helical transmembrane segments spans residues 4–24, 53–73, 78–98, 114–134, and 140–160; these read FYIM…VVLT, LGVL…LIAI, LGDA…CYPV, IFLV…ALLV, and VSLG…FTEG.

The protein belongs to the PlsY family. Probably interacts with PlsX.

The protein localises to the cell inner membrane. It carries out the reaction an acyl phosphate + sn-glycerol 3-phosphate = a 1-acyl-sn-glycero-3-phosphate + phosphate. The protein operates within lipid metabolism; phospholipid metabolism. Its function is as follows. Catalyzes the transfer of an acyl group from acyl-phosphate (acyl-PO(4)) to glycerol-3-phosphate (G3P) to form lysophosphatidic acid (LPA). This enzyme utilizes acyl-phosphate as fatty acyl donor, but not acyl-CoA or acyl-ACP. This chain is Glycerol-3-phosphate acyltransferase, found in Syntrophotalea carbinolica (strain DSM 2380 / NBRC 103641 / GraBd1) (Pelobacter carbinolicus).